The sequence spans 691 residues: Elongation factor G (691 aa).

The tr-type G domain occupies 8–283 (DMQRNIGIMA…AVVDFLPSPV (276 aa)). Residues 17-24 (AHIDAGKT), 81-85 (DTPGH), and 135-138 (NKMD) each bind GTP.

Belongs to the TRAFAC class translation factor GTPase superfamily. Classic translation factor GTPase family. EF-G/EF-2 subfamily.

The protein resides in the cytoplasm. In terms of biological role, catalyzes the GTP-dependent ribosomal translocation step during translation elongation. During this step, the ribosome changes from the pre-translocational (PRE) to the post-translocational (POST) state as the newly formed A-site-bound peptidyl-tRNA and P-site-bound deacylated tRNA move to the P and E sites, respectively. Catalyzes the coordinated movement of the two tRNA molecules, the mRNA and conformational changes in the ribosome. The protein is Elongation factor G of Nitratidesulfovibrio vulgaris (strain ATCC 29579 / DSM 644 / CCUG 34227 / NCIMB 8303 / VKM B-1760 / Hildenborough) (Desulfovibrio vulgaris).